A 117-amino-acid polypeptide reads, in one-letter code: Large ribosomal subunit protein bL17 (117 aa).

This sequence belongs to the bacterial ribosomal protein bL17 family. In terms of assembly, part of the 50S ribosomal subunit. Contacts protein L32.

This is Large ribosomal subunit protein bL17 from Campylobacter jejuni subsp. jejuni serotype O:6 (strain 81116 / NCTC 11828).